The chain runs to 88 residues: Small ribosomal subunit protein bS20 (88 aa).

Belongs to the bacterial ribosomal protein bS20 family. As to quaternary structure, part of the 30S ribosomal subunit.

Functionally, binds directly to 16S ribosomal RNA. The protein is Small ribosomal subunit protein bS20 (rpsT) of Bacillus subtilis (strain 168).